The chain runs to 360 residues: UDP-N-acetylglucosamine--N-acetylmuramyl-(pentapeptide) pyrophosphoryl-undecaprenol N-acetylglucosamine transferase (360 aa).

Residues Ser-198 and Gln-289 each coordinate UDP-N-acetyl-alpha-D-glucosamine.

It belongs to the glycosyltransferase 28 family. MurG subfamily.

The protein localises to the cell membrane. The enzyme catalyses Mur2Ac(oyl-L-Ala-gamma-D-Glu-L-Lys-D-Ala-D-Ala)-di-trans,octa-cis-undecaprenyl diphosphate + UDP-N-acetyl-alpha-D-glucosamine = beta-D-GlcNAc-(1-&gt;4)-Mur2Ac(oyl-L-Ala-gamma-D-Glu-L-Lys-D-Ala-D-Ala)-di-trans,octa-cis-undecaprenyl diphosphate + UDP + H(+). It participates in cell wall biogenesis; peptidoglycan biosynthesis. Its function is as follows. Cell wall formation. Catalyzes the transfer of a GlcNAc subunit on undecaprenyl-pyrophosphoryl-MurNAc-pentapeptide (lipid intermediate I) to form undecaprenyl-pyrophosphoryl-MurNAc-(pentapeptide)GlcNAc (lipid intermediate II). The protein is UDP-N-acetylglucosamine--N-acetylmuramyl-(pentapeptide) pyrophosphoryl-undecaprenol N-acetylglucosamine transferase of Streptococcus pyogenes serotype M4 (strain MGAS10750).